The sequence spans 495 residues: Surface E' protein (495 aa).

The helical transmembrane segment at 224–235 (GTLIGLVALIGV) threads the bilayer.

It is found in the cell membrane. The chain is Surface E' protein (cbbE') from Coxiella burnetii.